A 672-amino-acid chain; its full sequence is DNA-directed RNA polymerase subunit gamma (672 aa).

4 residues coordinate Zn(2+): Cys70, Cys72, Cys85, and Cys88. Mg(2+) contacts are provided by Asp466, Asp468, and Asp470.

The protein belongs to the RNA polymerase beta' chain family. RpoC1 subfamily. In cyanobacteria the RNAP catalytic core is composed of 2 alpha, 1 beta, 1 beta', 1 gamma and 1 omega subunit. When a sigma factor is associated with the core the holoenzyme is formed, which can initiate transcription. The cofactor is Mg(2+). Requires Zn(2+) as cofactor.

The catalysed reaction is RNA(n) + a ribonucleoside 5'-triphosphate = RNA(n+1) + diphosphate. DNA-dependent RNA polymerase catalyzes the transcription of DNA into RNA using the four ribonucleoside triphosphates as substrates. This chain is DNA-directed RNA polymerase subunit gamma, found in Trichodesmium erythraeum (strain IMS101).